A 243-amino-acid chain; its full sequence is MLRIVKKLWVILFISNISINSFAKNIYDNVDDANYDSTQYYENEGSLLFKMRLGGIFASAKQKGLPTHSSIQAVSVGEVAKNGYGGDASTTIFFNNYLAAELSLGFNVLRTKYTSLAAVAHNYGVDNVKLGKHKPIYMIPATLTGQFHIAPYGGIRPYIGIGYHGSYMLTQATGLKIRNGYNIVGQIGVDFYAKDDTLINMDVRQFFLKPKLEYKPNLVGNKKVTSKVKLNPLIVSIGIGFTF.

Residues 1–23 (MLRIVKKLWVILFISNISINSFA) form the signal peptide.

It belongs to the OmpW/AlkL family.

The protein localises to the cell outer membrane. This is Putative outer membrane protein RP075 from Rickettsia prowazekii (strain Madrid E).